A 228-amino-acid polypeptide reads, in one-letter code: Cytidylate kinase (228 aa).

12–20 serves as a coordination point for ATP; sequence GPSGSGKGT.

Belongs to the cytidylate kinase family. Type 1 subfamily.

The protein resides in the cytoplasm. The catalysed reaction is CMP + ATP = CDP + ADP. It catalyses the reaction dCMP + ATP = dCDP + ADP. This chain is Cytidylate kinase, found in Pseudomonas entomophila (strain L48).